The following is a 253-amino-acid chain: Giant extracellular hemoglobin linker 1 chain (253 aa).

The region spanning His-89–Ile-131 is the LDL-receptor class A domain. Cystine bridges form between Cys-91/Cys-105, Cys-98/Cys-118, and Cys-112/Cys-129.

As to quaternary structure, disulfide-linked dimer of identical chains. A model is proposed for the subunit structure of the Tylorrhynchus hemoglobin, consisting of 216 polypeptide chains, 192 heme-containing chains, and 24 linker chains.

Functionally, acts as a linker for the assembly of heme-containing chains in the construction of giant hemoglobin. The chain is Giant extracellular hemoglobin linker 1 chain from Tylorrhynchus heterochetus (Japanese palolo worm).